We begin with the raw amino-acid sequence, 157 residues long: Transcriptional repressor NrdR (157 aa).

The segment at 1–21 is disordered; sequence MKCPNCHKNGSRVVDSRPADN. A zinc finger spans residues 3–34; sequence CPNCHKNGSRVVDSRPADNGHAIRRRRECEQC. The ATP-cone domain maps to 49–139; sequence LLVIKKNGTR…VYREFKDMHA (91 aa).

The protein belongs to the NrdR family. Zn(2+) is required as a cofactor.

Negatively regulates transcription of bacterial ribonucleotide reductase nrd genes and operons by binding to NrdR-boxes. This chain is Transcriptional repressor NrdR, found in Ligilactobacillus salivarius (strain UCC118) (Lactobacillus salivarius).